The primary structure comprises 328 residues: Malate dehydrogenase (328 aa).

G12–G18 contacts NAD(+). Positions 93 and 99 each coordinate substrate. Residues N106, Q113, and T130–N132 contribute to the NAD(+) site. Substrate is bound by residues N132 and R163. The active-site Proton acceptor is the H188.

Belongs to the LDH/MDH superfamily. MDH type 2 family.

The enzyme catalyses (S)-malate + NAD(+) = oxaloacetate + NADH + H(+). Catalyzes the reversible oxidation of malate to oxaloacetate. This Kocuria rhizophila (strain ATCC 9341 / DSM 348 / NBRC 103217 / DC2201) protein is Malate dehydrogenase.